The sequence spans 405 residues: MKPLGTPLSPDATRVMLLGSGELGKEVLIALQRLGVETIAVDRYDNAPGQQVAHQSHTIAMSDPAALRTLIEAERPDLVVPEIEAIATQTLEALEAEGVVRVIPTARATRLTMDREGIRRLAAETLGLPTSPYRFCDSLAELQAAIDGADGQPAIGYPCIVKPVMSSSGKGQSKIDGPADVQAAWDYAMVGGRVSNGRVIVEGFIDFDYEITQLTVRALGADGQVETHFCDPIGHVQVRGDYVESWQPHPMQPAALALSRHIARTVTDNLGGQGLFGVELFVKGDLVWFSEVSPRPHDTGMVTMITQWQNEFELHARAILGLPVSTALKSPGASAVIYGGVDAPGVVYDGVDEALRVPNSEIRLFGKPESFERRRMGVALVHDADVDVARTQAKLAAGKVKARPA.

N(1)-(5-phospho-beta-D-ribosyl)glycinamide is bound by residues Glu22–Leu23 and Glu82. ATP is bound by residues Arg115, Lys162, Ser167–Gln172, Glu202–Ile205, and Glu210. Residues Arg120–Leu320 form the ATP-grasp domain. Positions 279 and 291 each coordinate Mg(2+). Residues Asp298, Lys367, and Arg374 to Arg375 contribute to the N(1)-(5-phospho-beta-D-ribosyl)glycinamide site.

The protein belongs to the PurK/PurT family. Homodimer.

It carries out the reaction N(1)-(5-phospho-beta-D-ribosyl)glycinamide + formate + ATP = N(2)-formyl-N(1)-(5-phospho-beta-D-ribosyl)glycinamide + ADP + phosphate + H(+). It participates in purine metabolism; IMP biosynthesis via de novo pathway; N(2)-formyl-N(1)-(5-phospho-D-ribosyl)glycinamide from N(1)-(5-phospho-D-ribosyl)glycinamide (formate route): step 1/1. Its function is as follows. Involved in the de novo purine biosynthesis. Catalyzes the transfer of formate to 5-phospho-ribosyl-glycinamide (GAR), producing 5-phospho-ribosyl-N-formylglycinamide (FGAR). Formate is provided by PurU via hydrolysis of 10-formyl-tetrahydrofolate. In Leptothrix cholodnii (strain ATCC 51168 / LMG 8142 / SP-6) (Leptothrix discophora (strain SP-6)), this protein is Formate-dependent phosphoribosylglycinamide formyltransferase.